Here is a 214-residue protein sequence, read N- to C-terminus: Ribonuclease HII (214 aa).

The RNase H type-2 domain occupies 26–214 (EIVCGVDEAG…PVREAFDLIR (189 aa)). Positions 32, 33, and 124 each coordinate a divalent metal cation.

This sequence belongs to the RNase HII family. Mn(2+) is required as a cofactor. Requires Mg(2+) as cofactor.

It is found in the cytoplasm. The catalysed reaction is Endonucleolytic cleavage to 5'-phosphomonoester.. Endonuclease that specifically degrades the RNA of RNA-DNA hybrids. This chain is Ribonuclease HII, found in Burkholderia pseudomallei (strain 668).